The following is a 461-amino-acid chain: MGKEKIHINIVVIGHVDSGKSTTTGHLIYKCGGIDKRTIEKFEKEAAEMGKGSFKYAWVLDKLKAERERGITIDISLWKFETGKYYITIIDAPGHRDFIKNMITGTSQADCAVLIVAGGVGEFEAGISKNGQTREHALLAFTLGVKQLIIGVNKMDSTEPPFSQKRFEEITKEVSAYIKKIGYNPATVPFVPISGWHGDNMLEASTNMPWFKGWKIERKEGNASGITLLEALDCIIPPQRPTNKPLRLPLQDVYKIGGIGTVPVGRVETGVLKPGMIVTFAPSNVTTEVKSVEMHHEALVEALPGDNVGFNVKNISVKDIRRGNVAGDSKNDPPMQAGSFTAQVIILNHPGQISAGYAPVLDCHTAHIACKFAELKQKIDRRSGKKLEDDPKFLKSGDAAIVEMIPGKPMCVETFSDYPPLGRFAVRDMRQTVAVGVIKGVDKKLASSGKVTKSAAKAGKK.

Position 2 is a n,N,N-trimethylglycine (Gly-2). Residues Lys-5–Thr-242 enclose the tr-type G domain. Residues Gly-14–Ser-21 are G1. Residue Gly-14–Ser-21 participates in GTP binding. Positions Gly-70 to Asp-74 are G2. The G3 stretch occupies residues Asp-91 to Gly-94. GTP is bound by residues Asp-91–His-95 and Asn-153–Asp-156. Positions Asn-153 to Asp-156 are G4. Positions Ser-194 to Trp-196 are G5. 5-glutamyl glycerylphosphorylethanolamine is present on residues Glu-301 and Glu-374.

This sequence belongs to the TRAFAC class translation factor GTPase superfamily. Classic translation factor GTPase family. EF-Tu/EF-1A subfamily. Oocyte.

It is found in the cytoplasm. Its function is as follows. This protein promotes the GTP-dependent binding of aminoacyl-tRNA to the A-site of ribosomes during protein biosynthesis. The protein is Elongation factor 1-alpha, oocyte form of Xenopus laevis (African clawed frog).